Consider the following 293-residue polypeptide: Ribosomal protein L11 methyltransferase (293 aa).

Positions 145, 166, 188, and 230 each coordinate S-adenosyl-L-methionine.

This sequence belongs to the methyltransferase superfamily. PrmA family.

The protein resides in the cytoplasm. It carries out the reaction L-lysyl-[protein] + 3 S-adenosyl-L-methionine = N(6),N(6),N(6)-trimethyl-L-lysyl-[protein] + 3 S-adenosyl-L-homocysteine + 3 H(+). Methylates ribosomal protein L11. In Sodalis glossinidius (strain morsitans), this protein is Ribosomal protein L11 methyltransferase.